Reading from the N-terminus, the 468-residue chain is Alpha-N-acetylgalactosaminidase (468 aa).

Residues 1–30 (MENTRRNFLKKVTAAGIGAAGLAVTDQAMA) constitute a signal peptide (tat-type signal). Residues 62–63 (SR), D84, 133–136 (WEWH), 154–155 (EV), and N183 each bind NAD(+). Residue Y212 participates in substrate binding. Residue 243 to 247 (AEAQW) coordinates NAD(+). Residues R248, 260-263 (YPTH), and Y342 each bind substrate. NAD(+) is bound at residue Y260.

It belongs to the Gfo/Idh/MocA family. Glycosyl hydrolase 109 subfamily. NAD(+) serves as cofactor. Predicted to be exported by the Tat system. The position of the signal peptide cleavage has not been experimentally proven.

It catalyses the reaction Cleavage of non-reducing alpha-(1-&gt;3)-N-acetylgalactosamine residues from human blood group A and AB mucin glycoproteins, Forssman hapten and blood group A lacto series glycolipids.. Glycosidase that has specific alpha-N-acetylgalactosaminidase activity. This is Alpha-N-acetylgalactosaminidase (nagA) from Tannerella forsythia (Bacteroides forsythus).